The following is a 558-amino-acid chain: Atlastin-1 (558 aa).

Residues 1–27 (MAKNRRDRNSWGGFSEKTYEWSSEEEE) are disordered. The segment at 1–34 (MAKNRRDRNSWGGFSEKTYEWSSEEEEPVKKAGP) is N-terminal hypervariable region (HVR). Residues 1-449 (MAKNRRDRNS…NIFHAARTPA (449 aa)) lie on the Cytoplasmic side of the membrane. Serine 10, serine 22, and serine 23 each carry phosphoserine. Residues 64 to 309 (DKEVVAVSVA…LIPWLLSPES (246 aa)) enclose the GB1/RHD3-type G domain. GDP is bound by residues arginine 77, lysine 78, glycine 79, lysine 80, serine 81, phenylalanine 82, glutamine 148, arginine 217, aspartate 218, valine 276, and asparagine 279. Positions 77, 78, 79, 80, 81, and 82 each coordinate GTP. A Mg(2+)-binding site is contributed by serine 81. Arginine 217, aspartate 218, and valine 276 together coordinate GTP. The interval 347–438 (MLQATAEANN…YIQYIKHNDS (92 aa)) is 3HB (three-helix bundle) domain. Lysine 395 bears the N6-acetyllysine mark. Residues 412–439 (EFSRRYLQQLESEIDELYIQYIKHNDSK) are a coiled coil. Residues 439–447 (KNIFHAART) are linker. Residues 450 to 470 (TLFVVIFITYVIAGVTGFIGL) form a helical membrane-spanning segment. Position 471 (aspartate 471) is a topological domain, lumenal. The helical transmembrane segment at 472-492 (IIASLCNMIMGLTLITLCTWA) threads the bilayer. The Cytoplasmic portion of the chain corresponds to 493 to 558 (YIRYSGEYRE…STEQSEKKKM (66 aa)). The autoinhibitory domain stretch occupies residues 521–558 (NEALYKLYSAAATHRHLYHQAFPTPKSESTEQSEKKKM).

The protein belongs to the TRAFAC class dynamin-like GTPase superfamily. GB1/RHD3 GTPase family. GB1 subfamily. In terms of assembly, monomeric and homodimeric. The homodimer, transiently formed by two molecules on opposing membranes, is the active form mediating ER membrane fusion. Interacts with REEP1, REEP5, RTN3 and RTN4 (via the transmembrane region); these proteins are involved in endoplasmic reticulum tubular network organization. Interacts with ZFYVE27; both proteins are involved in endoplasmic reticulum tubular network organization. Interacts with ARL6IP1; both proteins are involved in endoplasmic reticulum tubular network organization. Interacts with SPAST; the interaction is direct, could recruit SPAST to Golgi membranes. Interacts (via N-terminal region) with MAP4K4 (via CNH regulatory domain). May interact with TMED2. Interacts with CPT1C. Phosphorylated. Phosphorylation, by different kinases, of the N-terminal hypervariable region (HVR) regulates the ATL1-mediated membrane tethering step.

It is found in the endoplasmic reticulum membrane. Its subcellular location is the golgi apparatus membrane. The protein resides in the cell projection. The protein localises to the axon. The catalysed reaction is GTP + H2O = GDP + phosphate + H(+). In terms of biological role, atlastin-1 (ATL1) is a membrane-anchored GTPase that mediates the GTP-dependent fusion of endoplasmic reticulum (ER) membranes, maintaining the continuous ER network. It facilitates the formation of three-way junctions where ER tubules intersect. Two atlastin-1 on neighboring ER tubules bind GTP and form loose homodimers through the GB1/RHD3-type G domains and 3HB regions. Upon GTP hydrolysis, the 3HB regions tighten, pulling the membranes together to drive their fusion. After fusion, the homodimer disassembles upon release of inorganic phosphate (Pi). Subsequently, GDP dissociates, resetting the monomers to a conformation ready for a new fusion cycle. May also regulate more or less directly Golgi biogenesis. Indirectly regulates axonal development. The chain is Atlastin-1 from Macaca fascicularis (Crab-eating macaque).